The primary structure comprises 490 residues: Betaine aldehyde dehydrogenase (490 aa).

Threonine 26, isoleucine 27, and aspartate 93 together coordinate K(+). NAD(+) is bound at residue 150 to 152; that stretch reads GAW. The active-site Charge relay system is lysine 162. 176–179 provides a ligand contact to NAD(+); sequence KPSE. Valine 180 lines the K(+) pocket. 230-233 contacts NAD(+); the sequence is GVAS. Leucine 246 is a binding site for K(+). The active-site Proton acceptor is the glutamate 252. NAD(+) is bound by residues glycine 254, cysteine 286, and glutamate 387. The Nucleophile role is filled by cysteine 286. A Cysteine sulfenic acid (-SOH) modification is found at cysteine 286. 2 residues coordinate K(+): lysine 457 and glycine 460. Residue glutamate 464 is the Charge relay system of the active site.

It belongs to the aldehyde dehydrogenase family. Dimer of dimers. It depends on K(+) as a cofactor.

The enzyme catalyses betaine aldehyde + NAD(+) + H2O = glycine betaine + NADH + 2 H(+). Its pathway is amine and polyamine biosynthesis; betaine biosynthesis via choline pathway; betaine from betaine aldehyde: step 1/1. Its function is as follows. Involved in the biosynthesis of the osmoprotectant glycine betaine. Catalyzes the irreversible oxidation of betaine aldehyde to the corresponding acid. The polypeptide is Betaine aldehyde dehydrogenase (Escherichia coli O45:K1 (strain S88 / ExPEC)).